An 86-amino-acid chain; its full sequence is Protein Tat (86 aa).

Positions 1-24 are interaction with human CREBBP; the sequence is MEPVDPRLEPWKHPGSQPKTACTN. The transactivation stretch occupies residues 1–48; that stretch reads MEPVDPRLEPWKHPGSQPKTACTNCYCKKCCFHCQVCFITKALGISYG. Residues cysteine 22, cysteine 25, and cysteine 27 each contribute to the Zn(2+) site. A cysteine-rich region spans residues 22 to 37; the sequence is CTNCYCKKCCFHCQVC. N6-acetyllysine; by host PCAF is present on lysine 28. Residues cysteine 30, histidine 33, cysteine 34, and cysteine 37 each contribute to the Zn(2+) site. The interval 38–48 is core; the sequence is FITKALGISYG. Over residues 48–58 the composition is skewed to basic residues; that stretch reads GRKKRRQRRRA. Residues 48-86 form a disordered region; it reads GRKKRRQRRRAPQGSQTHQVSLSKQPTSQSRGDPTGPKE. Positions 49–57 match the Nuclear localization signal, RNA-binding (TAR), and protein transduction motif; sequence RKKRRQRRR. The interaction with the host capping enzyme RNGTT stretch occupies residues 49 to 86; that stretch reads RKKRRQRRRAPQGSQTHQVSLSKQPTSQSRGDPTGPKE. N6-acetyllysine; by host EP300 and GCN5L2 is present on residues lysine 50 and lysine 51. Asymmetric dimethylarginine; by host PRMT6 occurs at positions 52 and 53. Over residues 60–79 the composition is skewed to polar residues; it reads QGSQTHQVSLSKQPTSQSRG. Residue lysine 71 forms a Glycyl lysine isopeptide (Lys-Gly) (interchain with G-Cter in ubiquitin) linkage. Residues 78 to 80 carry the Cell attachment site motif; it reads RGD.

It belongs to the lentiviruses Tat family. In terms of assembly, interacts with host CCNT1. Associates with the P-TEFb complex composed at least of Tat, P-TEFb (CDK9 and CCNT1), TAR RNA, RNA Pol II. Recruits the HATs CREBBP, TAF1/TFIID, EP300, PCAF and GCN5L2. Interacts with host KAT5/Tip60; this interaction targets the latter to degradation. Interacts with the host deacetylase SIRT1. Interacts with host capping enzyme RNGTT; this interaction stimulates RNGTT. Binds to host KDR, and to the host integrins ITGAV/ITGB3 and ITGA5/ITGB1. Interacts with host KPNB1/importin beta-1 without previous binding to KPNA1/importin alpha-1. Interacts with EIF2AK2. Interacts with host nucleosome assembly protein NAP1L1; this interaction may be required for the transport of Tat within the nucleus, since the two proteins interact at the nuclear rim. Interacts with host C1QBP/SF2P32; this interaction involves lysine-acetylated Tat. Interacts with the host chemokine receptors CCR2, CCR3 and CXCR4. Interacts with host DPP4/CD26; this interaction may trigger an anti-proliferative effect. Interacts with host LDLR. Interacts with the host extracellular matrix metalloproteinase MMP1. Interacts with host PRMT6; this interaction mediates Tat's methylation. Interacts with, and is ubiquitinated by MDM2/Hdm2. Interacts with host PSMC3 and HTATIP2. Interacts with STAB1; this interaction may overcome SATB1-mediated repression of IL2 and IL2RA (interleukin) in T cells by binding to the same domain than HDAC1. Interacts (when acetylated) with human CDK13, thereby increasing HIV-1 mRNA splicing and promoting the production of the doubly spliced HIV-1 protein Nef. Interacts with host TBP; this interaction modulates the activity of transcriptional pre-initiation complex. Interacts with host RELA. Interacts with host PLSCR1; this interaction negatively regulates Tat transactivation activity by altering its subcellular distribution. Asymmetrical arginine methylation by host PRMT6 seems to diminish the transactivation capacity of Tat and affects the interaction with host CCNT1. Post-translationally, acetylation by EP300, CREBBP, GCN5L2/GCN5 and PCAF regulates the transactivation activity of Tat. EP300-mediated acetylation of Lys-50 promotes dissociation of Tat from the TAR RNA through the competitive binding to PCAF's bromodomain. In addition, the non-acetylated Tat's N-terminus can also interact with PCAF. PCAF-mediated acetylation of Lys-28 enhances Tat's binding to CCNT1. Lys-50 is deacetylated by SIRT1. In terms of processing, polyubiquitination by host MDM2 does not target Tat to degradation, but activates its transactivation function and fosters interaction with CCNT1 and TAR RNA. Phosphorylated by EIF2AK2 on serine and threonine residues adjacent to the basic region important for TAR RNA binding and function. Phosphorylation of Tat by EIF2AK2 is dependent on the prior activation of EIF2AK2 by dsRNA.

It localises to the host nucleus. The protein localises to the host nucleolus. It is found in the host cytoplasm. The protein resides in the secreted. Functionally, transcriptional activator that increases RNA Pol II processivity, thereby increasing the level of full-length viral transcripts. Recognizes a hairpin structure at the 5'-LTR of the nascent viral mRNAs referred to as the transactivation responsive RNA element (TAR) and recruits the cyclin T1-CDK9 complex (P-TEFb complex) that will in turn hyperphosphorylate the RNA polymerase II to allow efficient elongation. The CDK9 component of P-TEFb and other Tat-activated kinases hyperphosphorylate the C-terminus of RNA Pol II that becomes stabilized and much more processive. Other factors such as HTATSF1/Tat-SF1, SUPT5H/SPT5, and HTATIP2 are also important for Tat's function. Besides its effect on RNA Pol II processivity, Tat induces chromatin remodeling of proviral genes by recruiting the histone acetyltransferases (HATs) CREBBP, EP300 and PCAF to the chromatin. This also contributes to the increase in proviral transcription rate, especially when the provirus integrates in transcriptionally silent region of the host genome. To ensure maximal activation of the LTR, Tat mediates nuclear translocation of NF-kappa-B by interacting with host RELA. Through its interaction with host TBP, Tat may also modulate transcription initiation. Tat can reactivate a latently infected cell by penetrating in it and transactivating its LTR promoter. In the cytoplasm, Tat is thought to act as a translational activator of HIV-1 mRNAs. Extracellular circulating Tat can be endocytosed by surrounding uninfected cells via the binding to several surface receptors such as CD26, CXCR4, heparan sulfate proteoglycans (HSPG) or LDLR. Neurons are rarely infected, but they internalize Tat via their LDLR. Through its interaction with nuclear HATs, Tat is potentially able to control the acetylation-dependent cellular gene expression. Modulates the expression of many cellular genes involved in cell survival, proliferation or in coding for cytokines or cytokine receptors. Tat plays a role in T-cell and neurons apoptosis. Tat induced neurotoxicity and apoptosis probably contribute to neuroAIDS. Circulating Tat also acts as a chemokine-like and/or growth factor-like molecule that binds to specific receptors on the surface of the cells, affecting many cellular pathways. In the vascular system, Tat binds to ITGAV/ITGB3 and ITGA5/ITGB1 integrins dimers at the surface of endothelial cells and competes with bFGF for heparin-binding sites, leading to an excess of soluble bFGF. In Human immunodeficiency virus type 1 group M subtype B (isolate PCV12) (HIV-1), this protein is Protein Tat.